We begin with the raw amino-acid sequence, 1226 residues long: uncharacterized protein (1226 aa).

Belongs to the Mg-chelatase subunit H family.

This is an uncharacterized protein from Methanocaldococcus jannaschii (strain ATCC 43067 / DSM 2661 / JAL-1 / JCM 10045 / NBRC 100440) (Methanococcus jannaschii).